Here is a 283-residue protein sequence, read N- to C-terminus: Protein/nucleic acid deglycase HchA (283 aa).

Zn(2+) contacts are provided by histidine 86, glutamate 91, and histidine 123. The active-site Nucleophile is cysteine 185.

The protein belongs to the peptidase C56 family. HchA subfamily. Homodimer.

It is found in the cytoplasm. The enzyme catalyses N(omega)-(1-hydroxy-2-oxopropyl)-L-arginyl-[protein] + H2O = lactate + L-arginyl-[protein] + H(+). It carries out the reaction N(6)-(1-hydroxy-2-oxopropyl)-L-lysyl-[protein] + H2O = lactate + L-lysyl-[protein] + H(+). The catalysed reaction is S-(1-hydroxy-2-oxopropyl)-L-cysteinyl-[protein] + H2O = lactate + L-cysteinyl-[protein] + H(+). It catalyses the reaction N(omega)-(1-hydroxy-2-oxoethyl)-L-arginyl-[protein] + H2O = L-arginyl-[protein] + glycolate + H(+). The enzyme catalyses N(6)-(1-hydroxy-2-oxoethyl)-L-lysyl-[protein] + H2O = glycolate + L-lysyl-[protein] + H(+). It carries out the reaction S-(1-hydroxy-2-oxoethyl)-L-cysteinyl-[protein] + H2O = glycolate + L-cysteinyl-[protein] + H(+). The catalysed reaction is N(2)-(1-hydroxy-2-oxopropyl)-dGTP + H2O = lactate + dGTP + H(+). It catalyses the reaction N(2)-(1-hydroxy-2-oxopropyl)-GTP + H2O = lactate + GTP + H(+). The enzyme catalyses N(2)-(1-hydroxy-2-oxopropyl)-GDP + H2O = lactate + GDP + H(+). It carries out the reaction N(2)-(1-hydroxy-2-oxopropyl)-GMP + H2O = lactate + GMP + H(+). The catalysed reaction is N(2)-(1-hydroxy-2-oxoethyl)-dGTP + H2O = dGTP + glycolate + H(+). It catalyses the reaction N(2)-(1-hydroxy-2-oxoethyl)-GTP + H2O = glycolate + GTP + H(+). The enzyme catalyses N(2)-(1-hydroxy-2-oxoethyl)-GDP + H2O = glycolate + GDP + H(+). It carries out the reaction N(2)-(1-hydroxy-2-oxoethyl)-GMP + H2O = glycolate + GMP + H(+). The catalysed reaction is an N(2)-(1-hydroxy-2-oxopropyl)-guanosine in RNA + H2O = a guanosine in RNA + lactate + H(+). It catalyses the reaction an N(2)-(1-hydroxy-2-oxopropyl)-2'-deoxyguanosine in DNA + H2O = a 2'-deoxyguanosine in DNA + lactate + H(+). The enzyme catalyses an N(2)-(1-hydroxy-2-oxoethyl)-guanosine in RNA + H2O = a guanosine in RNA + glycolate + H(+). It carries out the reaction an N(2)-(1-hydroxy-2-oxoethyl)-2'-deoxyguanosine in DNA + H2O = a 2'-deoxyguanosine in DNA + glycolate + H(+). Its function is as follows. Protein and nucleotide deglycase that catalyzes the deglycation of the Maillard adducts formed between amino groups of proteins or nucleotides and reactive carbonyl groups of glyoxals. Thus, functions as a protein deglycase that repairs methylglyoxal- and glyoxal-glycated proteins, and releases repaired proteins and lactate or glycolate, respectively. Deglycates cysteine, arginine and lysine residues in proteins, and thus reactivates these proteins by reversing glycation by glyoxals. Acts on early glycation intermediates (hemithioacetals and aminocarbinols), preventing the formation of Schiff bases and advanced glycation endproducts (AGE). Also functions as a nucleotide deglycase able to repair glycated guanine in the free nucleotide pool (GTP, GDP, GMP, dGTP) and in DNA and RNA. Is thus involved in a major nucleotide repair system named guanine glycation repair (GG repair), dedicated to reversing methylglyoxal and glyoxal damage via nucleotide sanitization and direct nucleic acid repair. Plays an important role in protecting cells from carbonyl stress. The protein is Protein/nucleic acid deglycase HchA of Shigella flexneri.